Here is a 466-residue protein sequence, read N- to C-terminus: Glucose-6-phosphate 1-dehydrogenase 1 (466 aa).

Residues S48, 88–89, and K141 contribute to the NADP(+) site; that span reads DV. Residues H171, K175, E209, and D228 each coordinate substrate. The active-site Proton acceptor is H233. Substrate-binding residues include K319 and K324.

This sequence belongs to the glucose-6-phosphate dehydrogenase family.

It carries out the reaction D-glucose 6-phosphate + NADP(+) = 6-phospho-D-glucono-1,5-lactone + NADPH + H(+). It participates in carbohydrate degradation; pentose phosphate pathway; D-ribulose 5-phosphate from D-glucose 6-phosphate (oxidative stage): step 1/3. Functionally, catalyzes the oxidation of glucose 6-phosphate to 6-phosphogluconolactone. This chain is Glucose-6-phosphate 1-dehydrogenase 1, found in Mycobacterium tuberculosis (strain CDC 1551 / Oshkosh).